The chain runs to 288 residues: Scolexin B (288 aa).

The first 20 residues, 1–20 (MFASKLAVCSALALLAVAHA), serve as a signal peptide directing secretion. Residues 21–287 (APGGNDIQKI…VRDWIKKVTN (267 aa)) enclose the Peptidase S1 domain. The interval 27–56 (IQKITKAPNVPTKAEGDAASKASAPAIPPK) is disordered. A disulfide bridge connects residues cysteine 72 and cysteine 88. Active-site charge relay system residues include histidine 87 and aspartate 145. 2 disulfides stabilise this stretch: cysteine 210–cysteine 223 and cysteine 235–cysteine 264. Catalysis depends on serine 239, which acts as the Charge relay system.

Belongs to the peptidase S1 family.

The sequence is that of Scolexin B from Heliothis virescens (Tobacco budworm moth).